The sequence spans 354 residues: Protein RecA (354 aa).

ATP is bound at residue 68-75 (GPESSGKT).

The protein belongs to the RecA family.

It is found in the cytoplasm. Functionally, can catalyze the hydrolysis of ATP in the presence of single-stranded DNA, the ATP-dependent uptake of single-stranded DNA by duplex DNA, and the ATP-dependent hybridization of homologous single-stranded DNAs. It interacts with LexA causing its activation and leading to its autocatalytic cleavage. The sequence is that of Protein RecA from Synechocystis sp. (strain ATCC 27184 / PCC 6803 / Kazusa).